Consider the following 266-residue polypeptide: Small ribosomal subunit protein uS2 (266 aa).

Residues 227-266 (GVSFTEETPSEPIQSDSSEEEEGSLDISDLFEDTDLKEEE) form a disordered region. Residues 231–240 (TEETPSEPIQ) are compositionally biased toward polar residues. Positions 243–266 (SSEEEEGSLDISDLFEDTDLKEEE) are enriched in acidic residues.

The protein belongs to the universal ribosomal protein uS2 family.

The sequence is that of Small ribosomal subunit protein uS2 from Pseudothermotoga lettingae (strain ATCC BAA-301 / DSM 14385 / NBRC 107922 / TMO) (Thermotoga lettingae).